The sequence spans 566 residues: Glucose starvation modulator protein 1 (566 aa).

The zn(2)-C6 fungal-type DNA-binding region spans Cys20–Cys48. Disordered stretches follow at residues Pro65–Ser93 and Lys250–Ser270. Polar residues predominate over residues Pro83–Ser93. Residues Ser253 to Ser270 are compositionally biased toward low complexity.

Belongs to the ERT1/acuK family.

Its subcellular location is the nucleus. Functionally, transcription factor which regulates nonfermentable carbon utilization. The polypeptide is Glucose starvation modulator protein 1 (ZCF23) (Candida albicans (strain SC5314 / ATCC MYA-2876) (Yeast)).